The following is a 342-amino-acid chain: 4-amino-5-hydroxymethyl-2-methylpyrimidine phosphate synthase (342 aa).

At Lys-62 the chain carries N6-(pyridoxal phosphate)lysine. His-66 is a catalytic residue. 115-118 contributes to the pyridoxal 5'-phosphate binding site; the sequence is GEFG. A CCCFC; essential for catalytic activity, may be the site of iron coordination motif is present at residues 195-199; it reads CCCFC.

It belongs to the NMT1/THI5 family. In terms of assembly, homodimer. It depends on Fe cation as a cofactor.

The enzyme catalyses N(6)-(pyridoxal phosphate)-L-lysyl-[4-amino-5-hydroxymethyl-2-methylpyrimidine phosphate synthase] + L-histidyl-[4-amino-5-hydroxymethyl-2-methylpyrimidine phosphate synthase] + 2 Fe(3+) + 4 H2O = L-lysyl-[4-amino-5-hydroxymethyl-2-methylpyrimidine phosphate synthase] + (2S)-2-amino-5-hydroxy-4-oxopentanoyl-[4-amino-5-hydroxymethyl-2-methylpyrimidine phosphate synthase] + 4-amino-2-methyl-5-(phosphooxymethyl)pyrimidine + 3-oxopropanoate + 2 Fe(2+) + 2 H(+). Its pathway is cofactor biosynthesis; thiamine diphosphate biosynthesis. In terms of biological role, responsible for the formation of the pyrimidine heterocycle in the thiamine biosynthesis pathway. Catalyzes the formation of hydroxymethylpyrimidine phosphate (HMP-P) from histidine and pyridoxal phosphate (PLP). The protein uses PLP and the active site histidine to form HMP-P, generating an inactive enzyme. The enzyme can only undergo a single turnover, which suggests it is a suicide enzyme. This chain is 4-amino-5-hydroxymethyl-2-methylpyrimidine phosphate synthase, found in Aspergillus parasiticus.